A 366-amino-acid chain; its full sequence is Polyprenyl transferase AOL_s00215g276 (366 aa).

Residues 1–22 (MESIIARPRTRSSAKEKTQTMS) are disordered. The next 7 helical transmembrane spans lie at 53 to 73 (LHTL…CLSA), 85 to 105 (FLSV…AFCT), 137 to 157 (IIAF…TLGF), 160 to 180 (ALVC…KRVV), 185 to 205 (LVLG…VAGN), 212 to 232 (AVPM…IYAT), and 253 to 273 (HMHQ…SFTA). An N-linked (GlcNAc...) asparagine glycan is attached at N277. Transmembrane regions (helical) follow at residues 281–301 (LFWS…LLSL) and 312–332 (VFLM…IELW). N-linked (GlcNAc...) asparagine glycosylation occurs at N352.

The protein belongs to the UbiA prenyltransferase family. Mg(2+) is required as a cofactor.

The protein localises to the membrane. The protein operates within secondary metabolite biosynthesis; terpenoid biosynthesis. Polyprenyl transferase; part of the gene cluster that mediates the biosynthesis of sesquiterpenyl epoxy-cyclohexenoids (SECs) such as anthrobotrisins and arthrosporols, metabolites that possess a novel hybrid carbon skeleton consisting of a polyketide-derived epoxycyclohexenol combined with a terpenoid-derived monocyclic sesquiterpenol substructure (PKS-PTS hybrid). The SEC pathway plays an important role for fungal soil colonization via decreasing fungal nematode-capturing ability. Within the pathway, the polyprenyl transferase catalyzes the farnesylation of toluquinol to yield farnesyl hydroquinone, the first hybrid precursor for biosynthesis of SECs, and farnesyl quinone (34) might be the key precursor for the epoxy ring formation. The pathway begins with the biosynthesis of 6-methylsalicylic acid (6-MSA), the first precursor of the polyketide-derived epoxycyclohexenol in arthrosporols, by the polyketide synthase (PKS) AOL_s00215g283 via condensation of 1 acetate and 3 malonate units. The 6-methylsalicylic acid decarboxylase AOL_s00215g281 then catalyzes the decarboxylation of 6-methylsalicylic acid to yield m-cresol. The cytochrome P450 monooxygenase AOL_s00215g282 further oxidizes m-cresol to yield toluquinol. With the assistance of the oxidoreductase AOL_s00215g277, the polyprenyl transferase AOL_s00215g276 catalyzes the farnesylation of toluquinol to produce farnesyl hydroquinone, the hybrid precursor for biosynthesis of SECs. Farnesyl hydroquinone undergoes epoxidation and then subsequent dehydrogenation to form farnesyl epoxy-quinone, the first and simplest SEC. The cytochrome P450 monooxygenase AOL_s00215g278 and the FAD-dependent monooxygenase AOL_s00215g279 might be involved in the oxygenation of the phenol moiety, most likely in the epoxy formation. The cytochrome P450 monooxygenases AOL_s00215g274 and AOL_s00215g280 are involved in specific regional ketone reductions at respectively C-4 and C-1 of farnesyl epoxy-quinone PubMed:33823587. This is Polyprenyl transferase AOL_s00215g276 from Arthrobotrys oligospora (strain ATCC 24927 / CBS 115.81 / DSM 1491) (Nematode-trapping fungus).